A 288-amino-acid chain; its full sequence is Phosphatidylserine decarboxylase proenzyme (288 aa).

Residues D91, H148, and S254 each act as charge relay system; for autoendoproteolytic cleavage activity in the active site. S254 acts as the Schiff-base intermediate with substrate; via pyruvic acid; for decarboxylase activity in catalysis. The residue at position 254 (S254) is a Pyruvic acid (Ser); by autocatalysis.

Belongs to the phosphatidylserine decarboxylase family. PSD-B subfamily. Prokaryotic type I sub-subfamily. As to quaternary structure, heterodimer of a large membrane-associated beta subunit and a small pyruvoyl-containing alpha subunit. The cofactor is pyruvate. In terms of processing, is synthesized initially as an inactive proenzyme. Formation of the active enzyme involves a self-maturation process in which the active site pyruvoyl group is generated from an internal serine residue via an autocatalytic post-translational modification. Two non-identical subunits are generated from the proenzyme in this reaction, and the pyruvate is formed at the N-terminus of the alpha chain, which is derived from the carboxyl end of the proenzyme. The autoendoproteolytic cleavage occurs by a canonical serine protease mechanism, in which the side chain hydroxyl group of the serine supplies its oxygen atom to form the C-terminus of the beta chain, while the remainder of the serine residue undergoes an oxidative deamination to produce ammonia and the pyruvoyl prosthetic group on the alpha chain. During this reaction, the Ser that is part of the protease active site of the proenzyme becomes the pyruvoyl prosthetic group, which constitutes an essential element of the active site of the mature decarboxylase.

The protein resides in the cell membrane. It carries out the reaction a 1,2-diacyl-sn-glycero-3-phospho-L-serine + H(+) = a 1,2-diacyl-sn-glycero-3-phosphoethanolamine + CO2. It functions in the pathway phospholipid metabolism; phosphatidylethanolamine biosynthesis; phosphatidylethanolamine from CDP-diacylglycerol: step 2/2. Its function is as follows. Catalyzes the formation of phosphatidylethanolamine (PtdEtn) from phosphatidylserine (PtdSer). In Pseudoalteromonas translucida (strain TAC 125), this protein is Phosphatidylserine decarboxylase proenzyme.